The following is a 529-amino-acid chain: Peptide chain release factor 3 (529 aa).

Residues 10 to 279 (EQRRCFGIIS…ALVEMAPAPG (270 aa)) enclose the tr-type G domain. GTP is bound by residues 19 to 26 (SHPDAGKT), 87 to 91 (DTPGH), and 141 to 144 (NKMD).

This sequence belongs to the TRAFAC class translation factor GTPase superfamily. Classic translation factor GTPase family. PrfC subfamily.

The protein localises to the cytoplasm. In terms of biological role, increases the formation of ribosomal termination complexes and stimulates activities of RF-1 and RF-2. It binds guanine nucleotides and has strong preference for UGA stop codons. It may interact directly with the ribosome. The stimulation of RF-1 and RF-2 is significantly reduced by GTP and GDP, but not by GMP. The sequence is that of Peptide chain release factor 3 from Desulfatibacillum aliphaticivorans.